We begin with the raw amino-acid sequence, 157 residues long: Small ribosomal subunit protein uS7 (157 aa).

The protein belongs to the universal ribosomal protein uS7 family. Part of the 30S ribosomal subunit. Contacts proteins S9 and S11.

Functionally, one of the primary rRNA binding proteins, it binds directly to 16S rRNA where it nucleates assembly of the head domain of the 30S subunit. Is located at the subunit interface close to the decoding center, probably blocks exit of the E-site tRNA. The chain is Small ribosomal subunit protein uS7 from Caldicellulosiruptor saccharolyticus (strain ATCC 43494 / DSM 8903 / Tp8T 6331).